A 375-amino-acid polypeptide reads, in one-letter code: Histidine biosynthesis bifunctional protein HisB (375 aa).

The histidinol-phosphatase stretch occupies residues 1 to 168 (MTPILFVDRD…GIAHELADAP (168 aa)). The active-site Nucleophile is aspartate 8. Aspartate 8, aspartate 10, and aspartate 128 together coordinate Mg(2+). Aspartate 10 serves as the catalytic Proton donor. Positions 169-375 (RRAVVQRNTK…SALPTTKGAL (207 aa)) are imidazoleglycerol-phosphate dehydratase.

It in the N-terminal section; belongs to the histidinol-phosphatase family. In the C-terminal section; belongs to the imidazoleglycerol-phosphate dehydratase family. Mg(2+) is required as a cofactor.

The protein localises to the cytoplasm. The enzyme catalyses D-erythro-1-(imidazol-4-yl)glycerol 3-phosphate = 3-(imidazol-4-yl)-2-oxopropyl phosphate + H2O. It carries out the reaction L-histidinol phosphate + H2O = L-histidinol + phosphate. The protein operates within amino-acid biosynthesis; L-histidine biosynthesis; L-histidine from 5-phospho-alpha-D-ribose 1-diphosphate: step 6/9. It participates in amino-acid biosynthesis; L-histidine biosynthesis; L-histidine from 5-phospho-alpha-D-ribose 1-diphosphate: step 8/9. The protein is Histidine biosynthesis bifunctional protein HisB of Xanthomonas oryzae pv. oryzae (strain MAFF 311018).